Here is a 396-residue protein sequence, read N- to C-terminus: Putative F-box protein At4g22660 (396 aa).

The 52-residue stretch at 7–58 (PNTWSDLPLDLLNLVFKRLSFANFRQAKSVCSSWYSASKQSVPKNQIPWLML) folds into the F-box domain.

This Arabidopsis thaliana (Mouse-ear cress) protein is Putative F-box protein At4g22660.